The primary structure comprises 211 residues: Small ribosomal subunit protein uS3 (211 aa).

In terms of domain architecture, KH type-2 spans 38–106; that stretch reads LRNFLKKRLY…EVYLNIQEVR (69 aa).

Belongs to the universal ribosomal protein uS3 family. As to quaternary structure, part of the 30S ribosomal subunit. Forms a tight complex with proteins S10 and S14.

Binds the lower part of the 30S subunit head. Binds mRNA in the 70S ribosome, positioning it for translation. This Citrifermentans bemidjiense (strain ATCC BAA-1014 / DSM 16622 / JCM 12645 / Bem) (Geobacter bemidjiensis) protein is Small ribosomal subunit protein uS3.